Reading from the N-terminus, the 441-residue chain is Double-stranded RNA-binding protein 1 (441 aa).

DRBM domains are found at residues 1–71, 86–155, and 169–237; these read MYKS…HLSS, SYKS…SLPQ, and SYKN…HFED. The segment at 69-88 is disordered; that stretch reads LSSLPLPPPPPPSENQSSYK.

Its function is as follows. Binds double-stranded RNA. This Oryza sativa subsp. japonica (Rice) protein is Double-stranded RNA-binding protein 1 (DRB1).